The sequence spans 269 residues: Lysyl endopeptidase (269 aa).

3 disulfide bridges follow: Cys6–Cys216, Cys12–Cys80, and Cys36–Cys58. Active-site charge relay system residues include His57, Asp113, and Ser194.

It belongs to the peptidase S1 family.

It is found in the secreted. It catalyses the reaction Preferential cleavage: Lys-|-Xaa, including Lys-|-Pro.. Highly specific endopeptidase that hydrolyzes lysyl bonds including the Lys-Pro bond. This Lysobacter enzymogenes protein is Lysyl endopeptidase.